Here is a 295-residue protein sequence, read N- to C-terminus: Elongation factor Ts (295 aa).

Positions 79 to 82 (TDFV) are involved in Mg(2+) ion dislocation from EF-Tu.

Belongs to the EF-Ts family.

It localises to the cytoplasm. In terms of biological role, associates with the EF-Tu.GDP complex and induces the exchange of GDP to GTP. It remains bound to the aminoacyl-tRNA.EF-Tu.GTP complex up to the GTP hydrolysis stage on the ribosome. The polypeptide is Elongation factor Ts (Mycoplasma capricolum subsp. capricolum (strain California kid / ATCC 27343 / NCTC 10154)).